The chain runs to 192 residues: Orotate phosphoribosyltransferase (192 aa).

A 5-phospho-alpha-D-ribose 1-diphosphate-binding site is contributed by glutamate 116–serine 124. Residues threonine 120 and arginine 148 each coordinate orotate.

This sequence belongs to the purine/pyrimidine phosphoribosyltransferase family. PyrE subfamily. Homodimer. It depends on Mg(2+) as a cofactor.

It catalyses the reaction orotidine 5'-phosphate + diphosphate = orotate + 5-phospho-alpha-D-ribose 1-diphosphate. It functions in the pathway pyrimidine metabolism; UMP biosynthesis via de novo pathway; UMP from orotate: step 1/2. Functionally, catalyzes the transfer of a ribosyl phosphate group from 5-phosphoribose 1-diphosphate to orotate, leading to the formation of orotidine monophosphate (OMP). This is Orotate phosphoribosyltransferase from Clostridium perfringens (strain ATCC 13124 / DSM 756 / JCM 1290 / NCIMB 6125 / NCTC 8237 / Type A).